A 424-amino-acid polypeptide reads, in one-letter code: CinA-like protein (424 aa).

The protein belongs to the CinA family.

The polypeptide is CinA-like protein (Shewanella baltica (strain OS195)).